Here is a 147-residue protein sequence, read N- to C-terminus: Lipoprotein signal peptidase (147 aa).

Transmembrane regions (helical) follow at residues 10 to 30 (ISIFLILLIDQITKYLAIKFL), 34 to 54 (GIVKLLPFLNLVYVENTGTAF), 59 to 79 (FLGSGFFIIIALVVTGFLVYM), and 87 to 107 (WFIYSLIIAGALGNIIDRLIY). Active-site residues include Asp112 and Asp130. The helical transmembrane segment at 121-141 (LHWPAFNVADSAISIGIVLFV) threads the bilayer.

Belongs to the peptidase A8 family.

It is found in the cell inner membrane. The enzyme catalyses Release of signal peptides from bacterial membrane prolipoproteins. Hydrolyzes -Xaa-Yaa-Zaa-|-(S,diacylglyceryl)Cys-, in which Xaa is hydrophobic (preferably Leu), and Yaa (Ala or Ser) and Zaa (Gly or Ala) have small, neutral side chains.. It participates in protein modification; lipoprotein biosynthesis (signal peptide cleavage). Functionally, this protein specifically catalyzes the removal of signal peptides from prolipoproteins. In Thermodesulfovibrio yellowstonii (strain ATCC 51303 / DSM 11347 / YP87), this protein is Lipoprotein signal peptidase.